The primary structure comprises 433 residues: Epi-neemfruitin B synthase L1AT (433 aa).

Residues histidine 151 and aspartate 372 each act as proton acceptor in the active site.

This sequence belongs to the plant acyltransferase family. In terms of assembly, monomer. Mainly expressed in petioles and, to a lower extent, in roots.

It carries out the reaction (21S)-21-acetyl-1-hydroxy-apo-melianone + acetyl-CoA = epi-neemfruitin B + acetate + CoA + H(+). It participates in secondary metabolite biosynthesis; terpenoid biosynthesis. In terms of biological role, acetyltransferase involved in the biosynthesis of limonoids triterpene natural products such as azadirachtin, an antifeedant widely used as bioinsecticide, and possessing many medicinal applications including anti-tumoral, anti-malarial, anti-rheumatic, antibacterial, anti-inflammatory, anti-pyretic and diuretic effects. Catalyzes the formation of epi-neemfruitin B from (21S)-21-acetyl-1-hydroxy-apo-melianone. The sequence is that of Epi-neemfruitin B synthase L1AT from Melia azedarach (Chinaberry tree).